A 453-amino-acid polypeptide reads, in one-letter code: Secreted triacylglycerol lipase LIP3 (453 aa).

A signal peptide spans 1–19; it reads MKLGIVAFTLISFAAQALA. The N-linked (GlcNAc...) asparagine glycan is linked to Asn-98. Cys-115 and Cys-284 are oxidised to a cystine. Ser-197 (nucleophile) is an active-site residue. A glycan (N-linked (GlcNAc...) asparagine) is linked at Asn-230. Active-site residues include Asp-344 and His-378. Cysteines 360 and 406 form a disulfide.

This sequence belongs to the AB hydrolase superfamily. Lipase family. Class Lip subfamily.

The protein localises to the secreted. It localises to the cell wall. It carries out the reaction a triacylglycerol + H2O = a diacylglycerol + a fatty acid + H(+). The enzyme catalyses a monoacylglycerol + H2O = glycerol + a fatty acid + H(+). The catalysed reaction is a diacylglycerol + H2O = a monoacylglycerol + a fatty acid + H(+). Secreted lipase involved in Dandruff and seborrheic dermatitis (D/SD) probably via lipase-mediated breakdown of sebaceous lipids and release of irritating free fatty acids. Has triacylglycerol lipase activity and is able to hydrolyze triolein, tristearin, trilinolein, tripalmitoylglycerol and trihexadecenoin. Hydrolyzes diacylglycerols such as distearin, dilinolein, dipalmitoylglycerol and dipalmitolein. Mostly converts monoolein to di- and triolein, while free fatty acids are only produced in low amounts. In Malassezia globosa (strain ATCC MYA-4612 / CBS 7966) (Dandruff-associated fungus), this protein is Secreted triacylglycerol lipase LIP3.